A 289-amino-acid polypeptide reads, in one-letter code: Purine nucleoside phosphorylase (289 aa).

The residue at position 1 (M1) is an N-acetylmethionine. Residues S33, H64, and R84–H86 each bind phosphate. Position 88 (Y88) interacts with a purine D-ribonucleoside. A116 is a phosphate binding site. 2 residues coordinate a purine D-ribonucleoside: E201 and M219. Position 220 (S220) interacts with phosphate. N243 contributes to the a purine D-ribonucleoside binding site. S251 carries the post-translational modification Phosphoserine. H257 contacts a purine D-ribonucleoside.

This sequence belongs to the PNP/MTAP phosphorylase family. As to quaternary structure, homotrimer.

It localises to the cytoplasm. The catalysed reaction is inosine + phosphate = alpha-D-ribose 1-phosphate + hypoxanthine. It catalyses the reaction guanosine + phosphate = alpha-D-ribose 1-phosphate + guanine. The enzyme catalyses 2'-deoxyguanosine + phosphate = 2-deoxy-alpha-D-ribose 1-phosphate + guanine. It carries out the reaction 2'-deoxyinosine + phosphate = 2-deoxy-alpha-D-ribose 1-phosphate + hypoxanthine. Its pathway is purine metabolism; purine nucleoside salvage. Functionally, catalyzes the phosphorolytic breakdown of the N-glycosidic bond in the beta-(deoxy)ribonucleoside molecules, with the formation of the corresponding free purine bases and pentose-1-phosphate. Preferentially acts on 6-oxopurine nucleosides including inosine and guanosine. The sequence is that of Purine nucleoside phosphorylase (PNP) from Bos taurus (Bovine).